The sequence spans 1547 residues: RNA replication protein (1547 aa).

The 169-residue stretch at 59-227 (NPFAVKAHTH…IHKYEQLEWI (169 aa)) folds into the Alphavirus-like MT domain. Composition is skewed to basic and acidic residues over residues 477–495 (AKEA…KEEQ) and 503–522 (RAEE…EPNP). Residues 477–523 (AKEAEATDEPQRPEVKEEQAEASTSGRAEEIQEDPATKKGKEEPNPN) form a disordered region. The Fe2OG dioxygenase domain occupies 599-690 (EFNQCLVQQF…RVSLTFRCTV (92 aa)). Positions 793–948 (LRQQGKEWGC…EASELCRYYI (156 aa)) constitute a (+)RNA virus helicase ATP-binding domain. 822–829 (GAGGSGKS) lines the ATP pocket. One can recognise a (+)RNA virus helicase C-terminal domain in the interval 949-1082 (NATHRNKKDL…TLREEVAQPI (134 aa)). The 108-residue stretch at 1324 to 1431 (GPSLANDFTA…DGLPALRPSF (108 aa)) folds into the RdRp catalytic domain.

Belongs to the potexvirus/carlavirus RNA replication protein family.

It carries out the reaction RNA(n) + a ribonucleoside 5'-triphosphate = RNA(n+1) + diphosphate. It catalyses the reaction ATP + H2O = ADP + phosphate + H(+). RNA replication. The central part of this protein possibly functions as an ATP-binding helicase. The sequence is that of RNA replication protein from Papaya mosaic potexvirus (PMV).